Here is a 681-residue protein sequence, read N- to C-terminus: DNA ligase (681 aa).

NAD(+)-binding positions include 42 to 46 (DAEYD), 91 to 92 (SL), and Glu-120. Lys-122 functions as the N6-AMP-lysine intermediate in the catalytic mechanism. The NAD(+) site is built by Arg-143, Glu-180, Lys-302, and Lys-326. Zn(2+) is bound by residues Cys-420, Cys-423, Cys-438, and Cys-444. Positions 603–681 (ADAQPLLGQT…EAGLIELIGL (79 aa)) constitute a BRCT domain.

Belongs to the NAD-dependent DNA ligase family. LigA subfamily. Mg(2+) is required as a cofactor. The cofactor is Mn(2+).

The enzyme catalyses NAD(+) + (deoxyribonucleotide)n-3'-hydroxyl + 5'-phospho-(deoxyribonucleotide)m = (deoxyribonucleotide)n+m + AMP + beta-nicotinamide D-nucleotide.. In terms of biological role, DNA ligase that catalyzes the formation of phosphodiester linkages between 5'-phosphoryl and 3'-hydroxyl groups in double-stranded DNA using NAD as a coenzyme and as the energy source for the reaction. It is essential for DNA replication and repair of damaged DNA. The protein is DNA ligase of Shewanella amazonensis (strain ATCC BAA-1098 / SB2B).